Reading from the N-terminus, the 490-residue chain is MAHKDSVDVALIGAGVISTTLSVMLKQLQPDWSQVIIERLDTPGAESSDPWNNAGTGHSALCELNYTPEVNGKIDISKAVGVNEKFQVSRQFWSYLVEQNVLGDPSEFINKVPHVSFAQGMDQVDYLKARYEALKDHPLFPNMQYSDSDEKFAEFLPLMARGRDFNNPVAISWFDEGTDINYGALTRQYLDAVTAQGVEVRFGNEVKNINRDGSKWKITTKNLHTGDTSMVTANFVFIGAGGMALPLLQKAGIPEIKGYGGFPVSGQWLRCTNPELVEQHQAKVYGKASVGAPPMSVPHLDTRVIDGKKGLLFGPYAGWTPKFLKKGSYLDLFKSLRVGNLPSYLGVGVQEMGLTKYLIEEVLKDQAARVESLREYMPEARAEDWELVTAGQRVQVIKPIGAPKFGSLEFGTALINSNDGSIAGLMGASPGASIAPSAMLEVLERCFGNRIADWAPKLREMIPSYGTRLSKDANLFNEQWDRSQKALKLV.

The protein belongs to the MQO family. It depends on FAD as a cofactor.

It carries out the reaction (S)-malate + a quinone = a quinol + oxaloacetate. Its pathway is carbohydrate metabolism; tricarboxylic acid cycle; oxaloacetate from (S)-malate (quinone route): step 1/1. The polypeptide is Probable malate:quinone oxidoreductase (Corynebacterium jeikeium (strain K411)).